Here is a 269-residue protein sequence, read N- to C-terminus: 4-chlorobenzoyl coenzyme A dehalogenase (269 aa).

Substrate is bound by residues R24 and 62 to 67; that span reads AGFYLR. H90 acts as the Proton acceptor in catalysis. A substrate-binding site is contributed by G114. D145 (nucleophile) is an active-site residue. Residue R257 coordinates substrate.

This sequence belongs to the enoyl-CoA hydratase/isomerase family. In terms of assembly, homotetramer. Homotetramer, homooctamer and larger multimers. Homotrimer.

The enzyme catalyses 4-chlorobenzoyl-CoA + H2O = 4-hydroxybenzoyl-CoA + chloride + H(+). It participates in xenobiotic degradation; 4-chlorobenzoate degradation; 4-hydroxybenzoate from 4-chlorobenzoate: step 2/3. Its activity is regulated as follows. Inactivated by 1 mM Ag(+) and by 5 mM Cu(2+). Partially inhibited by 5 mM Zn(2+), Mn(2+), Co(2+), Fe(2+) and Ni(2+). Unaffected by 10 mM Na(+), K(+) and Li(+) and by 0.5 mM Mg(2+), Mn(2+), Fe(2+), Ca(2+), Co(2+) and Zn(2+). Inhibited by the sulfhydryl blocking agent 5,5'-dithio-bis-(2-nitrobenzoate), SDS and N-bromosuccinimide. Unaffected by sodium azide and EDTA. Inactivated following treatment with diethyl pyrocarbonate; this inactivation is reversible by treatment with hydroxylamine. Dehalogenates 4-chlorobenzoyl-CoA, 4-iodobenzoyl-CoA and 4-bromobenzoyl-CoA, but not 4-fluorobenzoyl-CoA. Inactive towards crotonyl-CoA, alpha-methylcrotonyl-CoA and beta-methylcrotonyl-CoA. This Pseudomonas sp. (strain CBS-3) protein is 4-chlorobenzoyl coenzyme A dehalogenase.